Consider the following 130-residue polypeptide: Small ribosomal subunit protein uS9 (130 aa).

Residues 107 to 130 are disordered; that stretch reads DSREVERKKVGLRKARRRPQFSKR. The span at 116–130 shows a compositional bias: basic residues; the sequence is VGLRKARRRPQFSKR.

Belongs to the universal ribosomal protein uS9 family.

This is Small ribosomal subunit protein uS9 from Marinomonas sp. (strain MWYL1).